The following is a 350-amino-acid chain: UDP-N-acetylenolpyruvoylglucosamine reductase (350 aa).

The 172-residue stretch at 24–195 (HVDATARWLL…VAVEFNLPLL (172 aa)) folds into the FAD-binding PCMH-type domain. Arginine 172 is a catalytic residue. Serine 245 (proton donor) is an active-site residue. Glutamate 342 is a catalytic residue.

Belongs to the MurB family. FAD serves as cofactor.

It localises to the cytoplasm. It catalyses the reaction UDP-N-acetyl-alpha-D-muramate + NADP(+) = UDP-N-acetyl-3-O-(1-carboxyvinyl)-alpha-D-glucosamine + NADPH + H(+). The protein operates within cell wall biogenesis; peptidoglycan biosynthesis. Its function is as follows. Cell wall formation. This is UDP-N-acetylenolpyruvoylglucosamine reductase from Xanthomonas campestris pv. campestris (strain 8004).